Here is a 442-residue protein sequence, read N- to C-terminus: D-galactonate dehydratase family member SSLG_02014 (442 aa).

H161 contacts substrate. The Proton donor/acceptor role is filled by Y197. A Mg(2+)-binding site is contributed by D246. The Proton donor/acceptor role is filled by H248. The Mg(2+) site is built by E272 and E298. Substrate-binding residues include E298, R319, H348, D352, and E375.

This sequence belongs to the mandelate racemase/muconate lactonizing enzyme family. GalD subfamily. Mg(2+) is required as a cofactor.

The catalysed reaction is D-mannonate = 2-dehydro-3-deoxy-D-gluconate + H2O. In terms of biological role, has low D-mannonate dehydratase activity (in vitro), suggesting that this is not a physiological substrate and that it has no significant role in D-mannonate degradation in vivo. Has no detectable activity with a panel of 70 other acid sugars (in vitro). The chain is D-galactonate dehydratase family member SSLG_02014 from Streptomyces sp. (strain SPB78).